Consider the following 387-residue polypeptide: Apoptosis-inducing factor homolog B (387 aa).

Residues 12–16 (GGGYG), Arg47, and Asp292 contribute to the FAD site.

The protein belongs to the FAD-dependent oxidoreductase family. The cofactor is FAD.

Its function is as follows. Putative FAD-dependent oxidoreductase. The chain is Apoptosis-inducing factor homolog B (aifB) from Dictyostelium discoideum (Social amoeba).